The primary structure comprises 291 residues: Exosome complex component RRP42 (291 aa).

Alanine 2 carries the post-translational modification N-acetylalanine. Lysine 116 is subject to N6-acetyllysine. Serine 177 bears the Phosphoserine mark.

The protein belongs to the RNase PH family. As to quaternary structure, component of the RNA exosome core complex (Exo-9), composed of EXOSC1, EXOSC2, EXOSC3, EXOSC4, EXOSC5, EXOSC6, EXOSC7, EXOSC8 and EXOSC9; within the complex interacts with EXOSC2 and EXOSC4. The catalytically inactive RNA exosome core complex (Exo-9) associates with the catalytic subunit EXOSC10/RRP6. Exo-9 may associate with DIS3 to form the nucleolar exosome complex, or DIS3L to form the cytoplasmic exosome complex. Exo-9 is formed by a hexameric base ring consisting of the heterodimers EXOSC4-EXOSC9, EXOSC5-EXOSC8 and EXOSC6-EXOSC7, and a cap ring consisting of EXOSC1, EXOSC2 and EXOSC3. The RNA exosome complex associates with cofactors C1D/RRP47, MPHOSPH6/MPP6 and MTREX/MTR4. Interacts with ZC3HAV1. Interacts with DIS3; the interaction is direct.

The protein resides in the nucleus. The protein localises to the nucleolus. It is found in the cytoplasm. Functionally, non-catalytic component of the RNA exosome complex which has 3'-&gt;5' exoribonuclease activity and participates in a multitude of cellular RNA processing and degradation events. In the nucleus, the RNA exosome complex is involved in proper maturation of stable RNA species such as rRNA, snRNA and snoRNA, in the elimination of RNA processing by-products and non-coding 'pervasive' transcripts, such as antisense RNA species and promoter-upstream transcripts (PROMPTs), and of mRNAs with processing defects, thereby limiting or excluding their export to the cytoplasm. The RNA exosome may be involved in Ig class switch recombination (CSR) and/or Ig variable region somatic hypermutation (SHM) by targeting AICDA deamination activity to transcribed dsDNA substrates. In the cytoplasm, the RNA exosome complex is involved in general mRNA turnover and specifically degrades inherently unstable mRNAs containing AU-rich elements (AREs) within their 3' untranslated regions, and in RNA surveillance pathways, preventing translation of aberrant mRNAs. It seems to be involved in degradation of histone mRNA. The catalytic inactive RNA exosome core complex of 9 subunits (Exo-9) is proposed to play a pivotal role in the binding and presentation of RNA for ribonucleolysis, and to serve as a scaffold for the association with catalytic subunits and accessory proteins or complexes. The polypeptide is Exosome complex component RRP42 (EXOSC7) (Homo sapiens (Human)).